The following is a 164-amino-acid chain: R-phycoerythrin alpha chain (164 aa).

(2R,3E)-phycoerythrobilin-binding residues include Cys82 and Cys139.

Belongs to the phycobiliprotein family. As to quaternary structure, heterodimer of an alpha and a beta chain. In terms of processing, contains two covalently linked bilin chromophores.

Its subcellular location is the plastid. It is found in the chloroplast thylakoid membrane. In terms of biological role, light-harvesting photosynthetic bile pigment-protein from the phycobiliprotein complex. The chain is R-phycoerythrin alpha chain (cpeA) from Pyropia haitanensis (Red seaweed).